Reading from the N-terminus, the 805-residue chain is Acetyl-CoA decarbonylase/synthase complex subunit alpha 3 (805 aa).

Residues Cys72, Cys75, Cys76, Cys78, Cys83, and Cys93 each contribute to the [4Fe-4S] cluster site. His116 serves as a coordination point for CO. [Ni-4Fe-4S] cluster is bound by residues His249, Cys277, and Cys322. 4Fe-4S ferredoxin-type domains lie at 407 to 435 and 445 to 474; these read EEFK…IPEA and EYLE…LNVL. [4Fe-4S] cluster is bound by residues Cys416, Cys419, Cys422, Cys426, Cys454, Cys457, Cys460, and Cys464. Cys522, Cys551, and Cys586 together coordinate [Ni-4Fe-4S] cluster.

The protein belongs to the Ni-containing carbon monoxide dehydrogenase family. As to quaternary structure, heterotetramer of two alpha and two epsilon subunits. The ACDS complex is made up of alpha, epsilon, beta, gamma and delta subunits with a probable stoichiometry of (alpha(2)epsilon(2))(4)-beta(8)-(gamma(1)delta(1))(8). [4Fe-4S] cluster serves as cofactor. [Ni-4Fe-4S] cluster is required as a cofactor.

It catalyses the reaction CO + 2 oxidized [2Fe-2S]-[ferredoxin] + H2O = 2 reduced [2Fe-2S]-[ferredoxin] + CO2 + 2 H(+). Its pathway is one-carbon metabolism; methanogenesis from acetate. Functionally, part of the ACDS complex that catalyzes the reversible cleavage of acetyl-CoA, allowing growth on acetate as sole source of carbon and energy. The alpha-epsilon subcomponent functions as a carbon monoxide dehydrogenase. The protein is Acetyl-CoA decarbonylase/synthase complex subunit alpha 3 of Methanosarcina acetivorans (strain ATCC 35395 / DSM 2834 / JCM 12185 / C2A).